The sequence spans 373 residues: Chaperone protein DnaJ (373 aa).

The 67-residue stretch at 5-71 folds into the J domain; it reads DYYEILGVSR…EKRAMYDKFG (67 aa). The CR-type zinc-finger motif lies at 144 to 226; that stretch reads GVKIPLEYDR…CGGTGRIRKR (83 aa). Zn(2+) contacts are provided by C157, C160, C174, C177, C200, C203, C214, and C217. CXXCXGXG motif repeat units follow at residues 157–164, 174–181, 200–207, and 214–221; these read CEHCHGEG, CPKCHGTG, CNQCGGTG, and CRVCGGTG.

This sequence belongs to the DnaJ family. Homodimer. It depends on Zn(2+) as a cofactor.

It localises to the cytoplasm. Participates actively in the response to hyperosmotic and heat shock by preventing the aggregation of stress-denatured proteins and by disaggregating proteins, also in an autonomous, DnaK-independent fashion. Unfolded proteins bind initially to DnaJ; upon interaction with the DnaJ-bound protein, DnaK hydrolyzes its bound ATP, resulting in the formation of a stable complex. GrpE releases ADP from DnaK; ATP binding to DnaK triggers the release of the substrate protein, thus completing the reaction cycle. Several rounds of ATP-dependent interactions between DnaJ, DnaK and GrpE are required for fully efficient folding. Also involved, together with DnaK and GrpE, in the DNA replication of plasmids through activation of initiation proteins. In Thermosipho melanesiensis (strain DSM 12029 / CIP 104789 / BI429), this protein is Chaperone protein DnaJ.